A 405-amino-acid polypeptide reads, in one-letter code: Tyrosine--tRNA ligase (405 aa).

Tyr35 lines the L-tyrosine pocket. Positions 40–49 (ATSSSLHIGH) match the 'HIGH' region motif. Residues Tyr166 and Gln170 each coordinate L-tyrosine. The 'KMSKS' region signature appears at 226–230 (KMGKS). Lys229 provides a ligand contact to ATP. The S4 RNA-binding domain occupies 340–404 (VLLINLMLDS…VGKKKFLRIV (65 aa)).

Belongs to the class-I aminoacyl-tRNA synthetase family. TyrS type 1 subfamily. Homodimer.

The protein resides in the cytoplasm. It catalyses the reaction tRNA(Tyr) + L-tyrosine + ATP = L-tyrosyl-tRNA(Tyr) + AMP + diphosphate + H(+). Its function is as follows. Catalyzes the attachment of tyrosine to tRNA(Tyr) in a two-step reaction: tyrosine is first activated by ATP to form Tyr-AMP and then transferred to the acceptor end of tRNA(Tyr). This is Tyrosine--tRNA ligase from Borreliella afzelii (strain PKo) (Borrelia afzelii).